The chain runs to 109 residues: Nascent polypeptide-associated complex protein (109 aa).

The region spanning 3–70 is the NAC-A/B domain; sequence PMNPKQMKKM…YEVVKRPPKI (68 aa).

This sequence belongs to the NAC-alpha family. Homodimer. Interacts with the ribosome. Binds ribosomal RNA.

Functionally, contacts the emerging nascent chain on the ribosome. In Archaeoglobus fulgidus (strain ATCC 49558 / DSM 4304 / JCM 9628 / NBRC 100126 / VC-16), this protein is Nascent polypeptide-associated complex protein.